A 191-amino-acid polypeptide reads, in one-letter code: dCTP deaminase, dUMP-forming (191 aa).

DCTP contacts are provided by residues 101–106, Asp119, 127–129, Gln148, Tyr162, and Gln174; these read KSSLGR and TLE. Glu129 acts as the Proton donor/acceptor in catalysis. Residues 163–191 are disordered; that stretch reads GSAKYGSRYQGQRGPTPSRSYQNFHRTPI. Polar residues predominate over residues 171–191; the sequence is YQGQRGPTPSRSYQNFHRTPI.

It belongs to the dCTP deaminase family. Homotrimer.

The catalysed reaction is dCTP + 2 H2O = dUMP + NH4(+) + diphosphate. It participates in pyrimidine metabolism; dUMP biosynthesis; dUMP from dCTP: step 1/1. In terms of biological role, bifunctional enzyme that catalyzes both the deamination of dCTP to dUTP and the hydrolysis of dUTP to dUMP without releasing the toxic dUTP intermediate. This Nocardioides sp. (strain ATCC BAA-499 / JS614) protein is dCTP deaminase, dUMP-forming.